A 239-amino-acid chain; its full sequence is Splicing factor U2AF 35 kDa subunit (239 aa).

Alanine 2 is subject to N-acetylalanine. The C3H1-type 1 zinc-finger motif lies at 12–40; sequence EKDKVNCSFYFKIGACRHGDRCSRLHNKP. Position 39 is an N6-methyllysine (lysine 39). A phosphoserine mark is found at serine 61 and serine 145. In terms of domain architecture, RRM spans 65–147; it reads LRCAVSDVEM…QPIHAELSPV (83 aa). The C3H1-type 2 zinc finger occupies 149-176; it reads DFREACCRQYEMGECTRGGFCNFMHLKP. The residue at position 165 (arginine 165) is an Omega-N-methylarginine. The interval 183-239 is disordered; the sequence is RELYGRRRKKHRSRSRSRERRSRSRDRGRGGGGGGGGGGGRERDRRRSRDRERSGRF. The segment covering 188-208 has biased composition (basic residues); it reads RRRKKHRSRSRSRERRSRSRD. The segment covering 212-221 has biased composition (gly residues); it reads GGGGGGGGGG. Positions 222 to 239 are enriched in basic and acidic residues; sequence GRERDRRRSRDRERSGRF.

Belongs to the splicing factor SR family. As to quaternary structure, identified in the spliceosome C complex. Heterodimer with U2AF2. Interacts (via RS domain) with PHF5A (via N-terminus). Interacts with ZRANB2. Interacts with SDE2. Interacts with SF3B1. In terms of tissue distribution, expressed in primary spermatocytes and elongating spermatids (at protein level).

It is found in the nucleus. The protein localises to the nucleus speckle. Plays a critical role in both constitutive and enhancer-dependent splicing by mediating protein-protein interactions and protein-RNA interactions required for accurate 3'-splice site selection. Recruits U2 snRNP to the branch point. Directly mediates interactions between U2AF2 and proteins bound to the enhancers and thus may function as a bridge between U2AF2 and the enhancer complex to recruit it to the adjacent intron. In Mus musculus (Mouse), this protein is Splicing factor U2AF 35 kDa subunit (U2af1).